The chain runs to 418 residues: MFHRLLIATVVGILAAFAVAGFRHAMLLLEWLFLNNDSGSLVNAATNLSPWRRLLTPALGGLAAGLLLMGWQKFTQQRPHAPTDYMEALQTDGQFDYAASLVKSLASLLVVTSGSAIGREGAMILLAALAASCFAQRFTPRQEWKLWIACGAAAGMAAAYRAPLAGSLFIAEVLFGTMMLASLGPVIISAVVALLVSNLINHSDALLYNVQLSVTVQARDYALIISTGVLAGLCGPLLLTLMNACHRGFVSLKLAPPWQLALGGLIVGLLSLFTPAVWGNGYSTVQSFLTAPPLLMIIAGIFLCKLCAVLASSGSGAPGGVFTPTLFIGLAIGMLYGRSLGLWFPDGEEITLLLGLTGMATLLAATTHAPIMSTLMICEMTGEYQLLPGLLIACVIASVISRTLHRDSIYRQHTAQHS.

Residue M1 is a topological domain, cytoplasmic. The helical transmembrane segment at 2–22 (FHRLLIATVVGILAAFAVAGF) threads the bilayer. The Periplasmic portion of the chain corresponds to 23–53 (RHAMLLLEWLFLNNDSGSLVNAATNLSPWRR). The helical transmembrane segment at 54–74 (LLTPALGGLAAGLLLMGWQKF) threads the bilayer. The Cytoplasmic segment spans residues 75–145 (TQQRPHAPTD…QRFTPRQEWK (71 aa)). A helical membrane pass occupies residues 146-166 (LWIACGAAAGMAAAYRAPLAG). Residues 167–177 (SLFIAEVLFGT) are Periplasmic-facing. Residues 178–200 (MMLASLGPVIISAVVALLVSNLI) traverse the membrane as a helical segment. At 201-221 (NHSDALLYNVQLSVTVQARDY) the chain is on the cytoplasmic side. A helical transmembrane segment spans residues 222–242 (ALIISTGVLAGLCGPLLLTLM). Topologically, residues 243 to 257 (NACHRGFVSLKLAPP) are periplasmic. The chain crosses the membrane as a helical span at residues 258 to 278 (WQLALGGLIVGLLSLFTPAVW). Over 279–290 (GNGYSTVQSFLT) the chain is Cytoplasmic. A helical membrane pass occupies residues 291–311 (APPLLMIIAGIFLCKLCAVLA). Topologically, residues 312–315 (SSGS) are periplasmic. Residues 316–336 (GAPGGVFTPTLFIGLAIGMLY) traverse the membrane as a helical segment. Residues 337-351 (GRSLGLWFPDGEEIT) lie on the Cytoplasmic side of the membrane. A helical transmembrane segment spans residues 352–372 (LLLGLTGMATLLAATTHAPIM). The Periplasmic segment spans residues 373–379 (STLMICE). A helical membrane pass occupies residues 380–400 (MTGEYQLLPGLLIACVIASVI). Residues 401-418 (SRTLHRDSIYRQHTAQHS) lie on the Cytoplasmic side of the membrane.

Belongs to the chloride channel (TC 2.A.49) family. ClcB subfamily.

Its subcellular location is the cell inner membrane. Functionally, probably acts as an electrical shunt for an outwardly-directed proton pump that is linked to amino acid decarboxylation, as part of the extreme acid resistance (XAR) response. This Escherichia coli (strain K12) protein is Voltage-gated ClC-type chloride channel ClcB (clcB).